The sequence spans 162 residues: Ribosome maturation factor RimP (162 aa).

It belongs to the RimP family.

Its subcellular location is the cytoplasm. Functionally, required for maturation of 30S ribosomal subunits. This is Ribosome maturation factor RimP from Streptococcus gordonii (strain Challis / ATCC 35105 / BCRC 15272 / CH1 / DL1 / V288).